A 275-amino-acid chain; its full sequence is Interleukin-2 receptor subunit alpha (275 aa).

The N-terminal stretch at methionine 1–threonine 21 is a signal peptide. Sushi domains lie at glutamate 22–serine 81 and glycine 121–serine 186. At glutamate 22–glutamine 243 the chain is on the extracellular side. 3 disulfides stabilise this stretch: cysteine 24-cysteine 64, cysteine 49-cysteine 77, and cysteine 51-cysteine 79. N-linked (GlcNAc...) asparagine glycosylation occurs at asparagine 80. A disordered region spans residues lysine 86–glutamate 130. A compositionally biased stretch (basic and acidic residues) spans glycine 121–glutamate 130. 2 disulfide bridges follow: cysteine 123–cysteine 168 and cysteine 152–cysteine 184. Residues glycine 188–leucine 213 are disordered. The helical transmembrane segment at isoleucine 244 to leucine 262 threads the bilayer. The Cytoplasmic portion of the chain corresponds to threonine 263–isoleucine 275.

As to quaternary structure, non-covalent dimer of an alpha and a beta subunit. IL2R exists in 3 different forms: a high affinity dimer, an intermediate affinity monomer (beta subunit), and a low affinity monomer (alpha subunit). The high and intermediate affinity forms also associate with a gamma subunit.

Its subcellular location is the membrane. Receptor for interleukin-2. The receptor is involved in the regulation of immune tolerance by controlling regulatory T cells (TREGs) activity. TREGs suppress the activation and expansion of autoreactive T-cells. The protein is Interleukin-2 receptor subunit alpha (IL2RA) of Ovis aries (Sheep).